Reading from the N-terminus, the 143-residue chain is Large-conductance mechanosensitive channel (143 aa).

The next 2 helical transmembrane spans lie at 10 to 30 (FAVKGNVMDLAVGVIIGGAFS) and 89 to 109 (GSFITVAINFVILAFIIFLMV).

This sequence belongs to the MscL family. In terms of assembly, homopentamer.

It is found in the cell inner membrane. Functionally, channel that opens in response to stretch forces in the membrane lipid bilayer. May participate in the regulation of osmotic pressure changes within the cell. In Burkholderia cenocepacia (strain HI2424), this protein is Large-conductance mechanosensitive channel.